The primary structure comprises 254 residues: Diphthine synthase (254 aa).

S-adenosyl-L-methionine is bound by residues aspartate 83, leucine 86, 111-112, leucine 163, and valine 205; that span reads SI.

It belongs to the diphthine synthase family. In terms of assembly, homodimer.

It carries out the reaction 2-[(3S)-amino-3-carboxypropyl]-L-histidyl-[translation elongation factor 2] + 3 S-adenosyl-L-methionine = diphthine-[translation elongation factor 2] + 3 S-adenosyl-L-homocysteine + 3 H(+). It participates in protein modification; peptidyl-diphthamide biosynthesis. In terms of biological role, S-adenosyl-L-methionine-dependent methyltransferase that catalyzes the trimethylation of the amino group of the modified target histidine residue in translation elongation factor 2 (EF-2), to form an intermediate called diphthine. The three successive methylation reactions represent the second step of diphthamide biosynthesis. This chain is Diphthine synthase, found in Pyrobaculum aerophilum (strain ATCC 51768 / DSM 7523 / JCM 9630 / CIP 104966 / NBRC 100827 / IM2).